Consider the following 146-residue polypeptide: uncharacterized protein (146 aa).

This is an uncharacterized protein from Acidianus filamentous virus 1 (isolate United States/Yellowstone) (AFV-1).